Reading from the N-terminus, the 131-residue chain is MNSKAMQALIFLGFLATSCLAQAPAPAPTTVTPPPTALPPVTAETPSPIASPPVPVNEPTPAPTTSPTTSPVASPPQTDAPAPGPSAGLTPTSSPAPGPDGAADAPSAAWANKAFLVGTAVAGALYAVVLA.

A signal peptide spans 1–21; sequence MNSKAMQALIFLGFLATSCLA. Gln22 carries the pyrrolidone carboxylic acid modification. 5 positions are modified to 4-hydroxyproline: Pro24, Pro26, Pro28, Pro34, and Pro35. Residues Pro24, Pro26, Pro28, Pro34, and Pro35 are each glycosylated (O-linked (Ara...) hydroxyproline). The segment at 24 to 106 is disordered; that stretch reads PAPAPTTVTP…PGPDGAADAP (83 aa). 2 stretches are compositionally biased toward pro residues: residues 25–38 and 49–64; these read APAP…PTAL and IASP…PAPT. 2 stretches are compositionally biased toward low complexity: residues 65–76 and 90–106; these read TSPTTSPVASPP and TPTS…ADAP. Residue Ser107 is the site of GPI-anchor amidated serine attachment. A propeptide spans 108 to 131 (removed in mature form); that stretch reads AAWANKAFLVGTAVAGALYAVVLA.

This sequence belongs to the classical AGP family. O-glycosylated on hydroxyprolines; noncontiguous hydroxylproline residues are glycosylated with arabinogalactan.

The protein resides in the cell membrane. In terms of biological role, proteoglycan that seems to be implicated in diverse developmental roles such as differentiation, cell-cell recognition, embryogenesis and programmed cell death. This Arabidopsis thaliana (Mouse-ear cress) protein is Classical arabinogalactan protein 2 (AGP2).